Consider the following 354-residue polypeptide: MFIETLNLSHFRNFSEVALSPSPKINIITGDNGSGKTSLLEAIYLLGFGRSFRPGGFRQLIKEGNSGFTVFCRSQDYAIGVRRSTDGEQSLRLNGANVQRMSDVARLVPVQLLTPESVDILLEGPGQRRQFIDWGVFHVEHSFYSDWVAYTQLLKQRNSLLKQRSLPVREDRYWKEQLAYYGERISKSREKYLEELNDYIQELAKSFLSDVTMEVRLKSGWDTSQSLFDALESHTEKDKKYGFTSVGAHKADIKVIADGVEVKHRLSRGQLKTAITALKLAQGKHYQKIKRQPCIYLVDDLTSELDSKNQALLCRELENLDAQVFITAITGKQLSDKFQKSPRMFHVEHGVINE.

30–37 (GDNGSGKT) is a binding site for ATP.

This sequence belongs to the RecF family.

Its subcellular location is the cytoplasm. Its function is as follows. The RecF protein is involved in DNA metabolism; it is required for DNA replication and normal SOS inducibility. RecF binds preferentially to single-stranded, linear DNA. It also seems to bind ATP. The sequence is that of DNA replication and repair protein RecF from Idiomarina loihiensis (strain ATCC BAA-735 / DSM 15497 / L2-TR).